Consider the following 184-residue polypeptide: ATP synthase subunit b, chloroplastic (184 aa).

The helical transmembrane segment at 31–49 (IINSSVVLSVLIYFGKGVL) threads the bilayer.

This sequence belongs to the ATPase B chain family. F-type ATPases have 2 components, F(1) - the catalytic core - and F(0) - the membrane proton channel. F(1) has five subunits: alpha(3), beta(3), gamma(1), delta(1), epsilon(1). F(0) has four main subunits: a(1), b(1), b'(1) and c(10-14). The alpha and beta chains form an alternating ring which encloses part of the gamma chain. F(1) is attached to F(0) by a central stalk formed by the gamma and epsilon chains, while a peripheral stalk is formed by the delta, b and b' chains.

The protein resides in the plastid. It is found in the chloroplast thylakoid membrane. Its function is as follows. F(1)F(0) ATP synthase produces ATP from ADP in the presence of a proton or sodium gradient. F-type ATPases consist of two structural domains, F(1) containing the extramembraneous catalytic core and F(0) containing the membrane proton channel, linked together by a central stalk and a peripheral stalk. During catalysis, ATP synthesis in the catalytic domain of F(1) is coupled via a rotary mechanism of the central stalk subunits to proton translocation. Component of the F(0) channel, it forms part of the peripheral stalk, linking F(1) to F(0). The polypeptide is ATP synthase subunit b, chloroplastic (Pinus thunbergii (Japanese black pine)).